The primary structure comprises 196 residues: uncharacterized protein (196 aa).

Residues 1-10 (MPGMVPPHVP) are compositionally biased toward pro residues. Disordered stretches follow at residues 1 to 118 (MPGM…EGSG) and 176 to 196 (TEQAAPPVCPAPASRRLSAPG). Low complexity predominate over residues 25 to 45 (PVAPQVPSPGGAPGQGPYPYS). The span at 54 to 69 (LDTSGKNLTEQNSYSN) shows a compositional bias: polar residues.

This is an uncharacterized protein from Homo sapiens (Human).